Here is a 504-residue protein sequence, read N- to C-terminus: Maturase K (504 aa).

The protein belongs to the intron maturase 2 family. MatK subfamily.

The protein localises to the plastid. It is found in the chloroplast. Usually encoded in the trnK tRNA gene intron. Probably assists in splicing its own and other chloroplast group II introns. The chain is Maturase K from Nepenthes gracilis (Slender pitcher plant).